The primary structure comprises 397 residues: Myb family transcription factor PHL4 (397 aa).

The segment at 1–27 (MIPNDDDDANSMKNYPLNDDDANSMKN) is disordered. The region spanning 228–288 (AAAKGRMRWT…HLQKYRTAKY (61 aa)) is the HTH myb-type domain. Residues 259 to 284 (PKGVLKHMKVEGLTIFHVKSHLQKYR) constitute a DNA-binding region (H-T-H motif). Residues 319–339 (TETLRIQMEHQKKLHEQLESL) are coiled coil. The LHEQLE signature appears at 332–337 (LHEQLE). Positions 359–397 (KQNMGFGGPEQGEKTSAKTPENGSEESESPRPKRPRNEE) are disordered. A compositionally biased stretch (basic and acidic residues) spans 386–397 (ESPRPKRPRNEE). Ser387 bears the Phosphoserine mark.

Belongs to the MYB-CC family.

It is found in the nucleus. Transcription factor involved in male gametophyte development. The protein is Myb family transcription factor PHL4 of Arabidopsis thaliana (Mouse-ear cress).